The sequence spans 181 residues: Segregation and condensation protein B (181 aa).

It belongs to the ScpB family. Homodimer. Homodimerization may be required to stabilize the binding of ScpA to the Smc head domains. Component of a cohesin-like complex composed of ScpA, ScpB and the Smc homodimer, in which ScpA and ScpB bind to the head domain of Smc. The presence of the three proteins is required for the association of the complex with DNA.

It is found in the cytoplasm. In terms of biological role, participates in chromosomal partition during cell division. May act via the formation of a condensin-like complex containing Smc and ScpA that pull DNA away from mid-cell into both cell halves. This Desulforamulus reducens (strain ATCC BAA-1160 / DSM 100696 / MI-1) (Desulfotomaculum reducens) protein is Segregation and condensation protein B.